Here is a 695-residue protein sequence, read N- to C-terminus: LGLCLAAPRKSVRWCTISPAEAAKCAKFQRNMKKVRGPSVSCIRKTSSFECIQAIAANKADAVTLDGGLVYEAGLHPYKLRPVAAEVYQTRGKPQTRYYAVAVVKKGSGFQLNQLQGVKSCHTGLGRSAGWNIPIGTLRPYLNWTGPPEPLQKAVANFFSASCVPCADGKQYPNLCRLCAGTEADKCACSSQEPYFGYSGAFKCLENGAGDVAFVKDSTVFENLPDEADRDKYELLCPDNTRKPVDAFKECHLARVPSHAVVARSVDGREDLIWRLLHRAQEEFGRNKSSAFQLFKSTPENKDLLFKDSALGFVRIPSQIDSGLYLGANYLTATQNLRETAAEVAARRERVVWCAVGPEEERKCKQWSDVSNRKVACASASTTEECIALVLKGEADALNLDGGFIYVAGKCGLVPVLAENQKSQNSNAPDCVHRPPEGYLAVAVVRKSDADLTWNSLSGKKSCHTGVGRTAAWNIPMGLLFNQTGSCKFDKFFSQSCAPGADPQSSLCALCVGNNENENKCMPNSEERYYGYTGAFRCLAEKAGDVAFVKDVTVLQNTDGKNSEPWAKDLKQEDFELLCLDGTRKPVAEAESCHLARAPNHAVVSQSDRAQHLKKVLFLQQDQFGGNGPDCPGKFCLFKSETKNLLFNDNTECLAELQGKTTYEQYLGSEYVTSITNLRRCSSSPLLEACAFLRA.

Positions 1–6 are cleaved as a signal peptide; that stretch reads LGLCLA. Transferrin-like domains follow at residues 12–339 and 351–680; these read VRWC…NLRE and VVWC…NLRR. 2 disulfide bridges follow: C15-C51 and C25-C42. Residue D66 participates in Fe(3+) binding. K79 is a catalytic residue. Y98 is a Fe(3+) binding site. Disulfide bonds link C121–C204, C163–C179, C166–C189, C176–C187, and C237–C251. Residues T123, R127, A129, and G130 each contribute to the hydrogencarbonate site. The N-linked (GlcNAc...) asparagine glycan is linked to N143. Residue Y198 coordinates Fe(3+). H259 contacts Fe(3+). The Nucleophile role is filled by S265. A glycan (N-linked (GlcNAc...) asparagine) is linked at N287. 2 cysteine pairs are disulfide-bonded: C354/C386 and C364/C377. Position 401 (D401) interacts with Fe(3+). 8 cysteine pairs are disulfide-bonded: C411/C690, C431/C653, C463/C538, C487/C681, C497/C511, C508/C521, C579/C593, and C631/C636. P436 contributes to the D-glucose binding site. Fe(3+) is bound at residue Y439. 4 residues coordinate hydrogencarbonate: T465, R469, A471, and A472. N482 carries an N-linked (GlcNAc...) asparagine glycan. Y532 contributes to the Fe(3+) binding site. A D-glucose-binding site is contributed by N600. Fe(3+) is bound at residue H601. A D-glucose-binding site is contributed by Y666.

Belongs to the transferrin family. Monomer. Found in a complex with LTF, CLU, EPPIN and SEMG1. Found in a complex with MPO and LTF; interacts directly with CP, allows Fe(3+) incorporation into LTF and activation of CP ferroxidase activity. Poly-N-acetyllactosaminic carbohydrate moiety seems to be needed for TLR4 activation.

It is found in the secreted. The protein localises to the cytoplasmic granule. In terms of biological role, transferrins are iron binding transport proteins which can bind two Fe(3+) ions in association with the binding of an anion, usually bicarbonate. Its function is as follows. Major iron-binding and multifunctional protein found in exocrine fluids such as breast milk and mucosal secretions. Has antimicrobial activity, which depends on the extracellular cation concentration. Antimicrobial properties include bacteriostasis, which is related to its ability to sequester free iron and thus inhibit microbial growth, as well as direct bactericidal properties leading to the release of lipopolysaccharides from the bacterial outer membrane. Can also prevent bacterial biofilm development in P.aeruginosa infection. Has weak antifungal activity against C.albicans. Has anabolic, differentiating and anti-apoptotic effects on osteoblasts and can also inhibit osteoclastogenesis, possibly playing a role in the regulation of bone growth. Promotes binding of species C adenoviruses to epithelial cells, promoting adenovirus infection. Can inhibit papillomavirus infections. Stimulates the TLR4 signaling pathway leading to NF-kappa-B activation and subsequent pro-inflammatory cytokine production while also interfering with the lipopolysaccharide (LPS)-stimulated TLR4 signaling. Inhibits neutrophil granulocyte migration to sites of apoptosis, when secreted by apoptotic cells. Stimulates VEGFA-mediated endothelial cell migration and proliferation. Binds heparin, chondroitin sulfate and possibly other glycosaminoglycans (GAGs). Also binds specifically to pneumococcal surface protein A (PspA), the lipid A portion of bacterial lipopolysaccharide (LPS), lysozyme and DNA. Lactoferricin binds to the bacterial surface and is crucial for the bactericidal functions. Has some antiviral activity against papillomavirus infection. N-terminal region shows strong antifungal activity against C.albicans. Contains two BBXB heparin-binding consensus sequences that appear to form the predominate functional GAG-binding site. Functionally, the lactotransferrin transferrin-like domain 1 functions as a serine protease of the peptidase S60 family that cuts arginine rich regions. This function contributes to the antimicrobial activity. Shows a preferential cleavage at -Arg-Ser-Arg-Arg-|- and -Arg-Arg-Ser-Arg-|-, and of Z-Phe-Arg-|-aminomethylcoumarin sites. The protein is Lactotransferrin (LTF) of Equus caballus (Horse).